An 882-amino-acid polypeptide reads, in one-letter code: Leucine--tRNA ligase (882 aa).

The 'HIGH' region signature appears at 43-53 (PYPSGNLHMGH). The short motif at 632 to 636 (TMSKS) is the 'KMSKS' region element. Lys635 contributes to the ATP binding site.

Belongs to the class-I aminoacyl-tRNA synthetase family.

The protein resides in the cytoplasm. The catalysed reaction is tRNA(Leu) + L-leucine + ATP = L-leucyl-tRNA(Leu) + AMP + diphosphate. This Synechococcus sp. (strain JA-2-3B'a(2-13)) (Cyanobacteria bacterium Yellowstone B-Prime) protein is Leucine--tRNA ligase.